The primary structure comprises 195 residues: HTH-type transcriptional regulator BetI (195 aa).

Residues 8–68 enclose the HTH tetR-type domain; it reads SIRRRQLIDA…ATMRDITSQL (61 aa). The H-T-H motif DNA-binding region spans 31 to 50; it reads TIAQIARRAGVSTGIISHYF.

The protein operates within amine and polyamine biosynthesis; betaine biosynthesis via choline pathway [regulation]. Repressor involved in the biosynthesis of the osmoprotectant glycine betaine. It represses transcription of the choline transporter BetT and the genes of BetAB involved in the synthesis of glycine betaine. This Escherichia coli (strain K12 / DH10B) protein is HTH-type transcriptional regulator BetI.